The chain runs to 479 residues: Adenylate kinase 8 (479 aa).

2 adenylate kinase regions span residues 58–258 and 269–471; these read PRIV…TYVQ and PRVL…SGII. 67 to 72 is a binding site for ATP; the sequence is ASGKTT. An NMP 1 region spans residues 87 to 113; that stretch reads TLENLILNEFSYTATEARRLYLQRKTV. AMP is bound by residues 140-143, Gln147, and Arg203; that span reads GIPE. Positions 177-206 are LID 1; sequence GKRIDPQTGEIYHTTFDWPPESEIQNRLMV. 278 to 283 is an ATP binding site; sequence GSGKSL. An NMP 2 region spans residues 298-327; that stretch reads CCGQLLKEAVADRTTFGELIQPFFEKEMAV. Residues 325 to 327, 354 to 357, and Gln361 each bind AMP; these read MAV and GVPR. Positions 391–424 are LID 2; that stretch reads LRRIDPVTGERYHLMYKPPPTMEIQARLLQNPKD. An ATP-binding site is contributed by Arg392.

It belongs to the adenylate kinase family. In terms of assembly, interacts with CFAP45 and CFAP52; CFAP45 and AK8 dimerization may create a cavity at the interface of the dimer that can accommodate AMP. Expressed in respiratory cells (at protein level).

The protein localises to the cytoplasm. It is found in the cytosol. The protein resides in the cytoskeleton. It localises to the cilium axoneme. The catalysed reaction is AMP + ATP = 2 ADP. It carries out the reaction a 2'-deoxyribonucleoside 5'-diphosphate + ATP = a 2'-deoxyribonucleoside 5'-triphosphate + ADP. The enzyme catalyses a ribonucleoside 5'-diphosphate + ATP = a ribonucleoside 5'-triphosphate + ADP. Functionally, nucleoside monophosphate (NMP) kinase that catalyzes the reversible transfer of the terminal phosphate group between nucleoside triphosphates and monophosphates. Has highest activity toward AMP, and weaker activity toward dAMP, CMP and dCMP. Also displays broad nucleoside diphosphate kinase activity. This Homo sapiens (Human) protein is Adenylate kinase 8 (AK8).